We begin with the raw amino-acid sequence, 944 residues long: Translation initiation factor IF-2 (944 aa).

The segment at 61–281 (IQANQPAKNP…TAKNNKSHKI (221 aa)) is disordered. Residues 132 to 150 (TFENQTPPTENTPKVVSHS) show a composition bias toward polar residues. A compositionally biased stretch (basic and acidic residues) spans 151-169 (QIEKAKQKLQEIQKSREAL). Residues 175–185 (SNANNASNTNN) are compositionally biased toward low complexity. Basic and acidic residues predominate over residues 186–203 (AKKEISEVKKQEQEIKRH). Basic residues predominate over residues 204-215 (ENIKRRTGFRVI). Residues 244-259 (EDIKKEWQEKDKQEAK) are compositionally biased toward basic and acidic residues. Residues 443 to 612 (ERPPVVTIMG…LIQADIMELK (170 aa)) enclose the tr-type G domain. Residues 452-459 (GHVDHGKT) form a G1 region. A GTP-binding site is contributed by 452–459 (GHVDHGKT). The G2 stretch occupies residues 477–481 (GITQH). The tract at residues 498-501 (DTPG) is G3. Residues 498 to 502 (DTPGH) and 552 to 555 (NKMD) each bind GTP. A G4 region spans residues 552–555 (NKMD). The interval 588–590 (SAK) is G5.

This sequence belongs to the TRAFAC class translation factor GTPase superfamily. Classic translation factor GTPase family. IF-2 subfamily.

It is found in the cytoplasm. In terms of biological role, one of the essential components for the initiation of protein synthesis. Protects formylmethionyl-tRNA from spontaneous hydrolysis and promotes its binding to the 30S ribosomal subunits. Also involved in the hydrolysis of GTP during the formation of the 70S ribosomal complex. The protein is Translation initiation factor IF-2 of Helicobacter pylori (strain HPAG1).